Reading from the N-terminus, the 550-residue chain is CCR4-NOT transcription complex subunit 6-like-A (550 aa).

A required for interaction with cnot1, cnot3 and cnot7 region spans residues 1–148 (MPKEKYDPPD…LYQEPDGMRK (148 aa)). LRR repeat units lie at residues 52–73 (HLTVLHLSDNNLSRIPPDIAKL), 75–96 (NLVYLDLSSNKLRSLPAELGNV), 98–120 (SLRELLLNNNLLRVLPFELGRLF), and 121–143 (RLQTLGLKGNPLSQDILSLYQEP). Residues 153–550 (MLDNLSVHPE…INGVHLPSRR (398 aa)) are nuclease domain. Residue E235 participates in Mg(2+) binding. 4 residues coordinate substrate: E235, E271, H355, and P360. D405 is a Mg(2+) binding site. D405 acts as the Proton donor/acceptor in catalysis. Substrate is bound by residues N407, N474, and F479.

This sequence belongs to the CCR4/nocturin family. In terms of assembly, component of the CCR4-NOT complex. Requires Mg(2+) as cofactor.

Its subcellular location is the cytoplasm. The protein localises to the nucleus. It catalyses the reaction Exonucleolytic cleavage of poly(A) to 5'-AMP.. Poly(A) nuclease with 3'-5' RNase activity. Catalytic component of the CCR4-NOT complex which is one of the major cellular mRNA deadenylases and is linked to various cellular processes including bulk mRNA degradation, miRNA-mediated repression, translational repression during translational initiation and general transcription regulation. Additional complex functions may be a consequence of its influence on mRNA expression. The chain is CCR4-NOT transcription complex subunit 6-like-A (cnot6l-a) from Xenopus laevis (African clawed frog).